Here is a 119-residue protein sequence, read N- to C-terminus: Holo-[acyl-carrier-protein] synthase (119 aa).

Residues Asp8 and Glu58 each coordinate Mg(2+).

The protein belongs to the P-Pant transferase superfamily. AcpS family. The cofactor is Mg(2+).

Its subcellular location is the cytoplasm. The catalysed reaction is apo-[ACP] + CoA = holo-[ACP] + adenosine 3',5'-bisphosphate + H(+). Its function is as follows. Transfers the 4'-phosphopantetheine moiety from coenzyme A to a Ser of acyl-carrier-protein. The chain is Holo-[acyl-carrier-protein] synthase from Limosilactobacillus fermentum (strain NBRC 3956 / LMG 18251) (Lactobacillus fermentum).